A 1150-amino-acid polypeptide reads, in one-letter code: ATP-dependent DNA helicase Q-like 4B (1150 aa).

2 disordered regions span residues 124–143 (TPAI…GSTF) and 154–179 (CAHN…FSSS). A compositionally biased stretch (low complexity) spans 132–142 (TSRTSSTKGST). Positions 327–361 (DHVEQLHQKRLLLKKQIQQLEILIHNKERKKSQCL) form a coiled coil. Positions 416–428 (YDISSGSEEREQS) are enriched in basic and acidic residues. The segment at 416-446 (YDISSGSEEREQSVSEVIDVTDTESSNDKKW) is disordered. One can recognise a Helicase ATP-binding domain in the interval 478-653 (INATMSGCDV…VQALGLVNCV (176 aa)). 491 to 498 (MPTGGGKS) is an ATP binding site. Positions 597 to 600 (DEAH) match the DEAH box motif. The Helicase C-terminal domain maps to 678-823 (DIDKFIRENH…QMKMGYNCKA (146 aa)). One can recognise an HRDC domain in the interval 1029–1111 (SNLSGILLTA…DSTINDHYKT (83 aa)). Positions 1106–1150 (NDHYKTRPGSGKRRRDENVNPNVAEDDDPDWSASQSHKKVVKNKK) are disordered. Positions 1141–1150 (SHKKVVKNKK) are enriched in basic residues.

It belongs to the helicase family. RecQ subfamily. It depends on Mg(2+) as a cofactor. Requires Mn(2+) as cofactor. Mostly expressed in roots, seedlings, shoots, shoot apical mersitem, flowers, and siliques.

The protein resides in the nucleus. The enzyme catalyses Couples ATP hydrolysis with the unwinding of duplex DNA by translocating in the 3'-5' direction.. It catalyses the reaction ATP + H2O = ADP + phosphate + H(+). Functionally, 3'-5' DNA helicase that may play a role in the repair of DNA. Required to promote but not to suppress crossovers. In Arabidopsis thaliana (Mouse-ear cress), this protein is ATP-dependent DNA helicase Q-like 4B (RECQL4B).